A 207-amino-acid polypeptide reads, in one-letter code: Ras-related protein Rab-7a (207 aa).

An N-acetylthreonine modification is found at Thr2. The GTP site is built by Ser17, Gly18, Val19, Gly20, Lys21, Thr22, Ser23, Ser34, Asn35, Tyr37, and Thr40. A Mg(2+)-binding site is contributed by Thr22. Residues 28–41 (YVNKKFSNQYKATI) carry the Switch 1 motif. Mg(2+) contacts are provided by Thr40 and Asp63. Gly66 provides a ligand contact to GTP. The Switch 2 signature appears at 67–82 (QERFQSLGVAFYRGAD). Ser72 is modified (phosphoserine). Asn125, Lys126, Asp128, Ala156, and Lys157 together coordinate GTP. Glycyl lysine isopeptide (Lys-Gly) (interchain with G-Cter in ubiquitin) cross-links involve residues Lys191 and Lys194. S-geranylgeranyl cysteine attachment occurs at residues Cys205 and Cys207. Cys207 carries the cysteine methyl ester modification.

It belongs to the small GTPase superfamily. Rab family. Interacts with NTRK1/TRKA, RILP, PSMA7, RNF115 and FYCO1. Interacts with the PIK3C3/VPS34-PIK3R4 complex. The GTP-bound form interacts with OSBPL1A and RAC1. Interacts with CLN3. Interacts with CHM, the substrate-binding subunit of the Rab geranylgeranyltransferase complex. Interacts with C9orf72. Does not interact with HPS4 and the BLOC-3 complex (heterodimer of HPS1 and HPS4). Interacts with CLN5. Interacts with PLEKHM1 (via N- and C-terminus). Interacts with PRPH; the interaction is direct. Interacts with VPS13A. The GDP-bound form interacts with RIMOC1. Interacts with the MON1A-CCZ1B complex and this interaction is enhanced in the presence of RIMOC1. Interacts with VPS39 and VPS41. Forms a ternary complex with LAMP2 and RUFY4; the interaction with LAMP2 is mediated by RUFY4 (via RUN and coiled coil domains). Mg(2+) serves as cofactor. In terms of processing, deubiquitination at Lys-191 and Lys-194 by USP32. Post-translationally, phosphorylated at Ser-72 by LRRK1; phosphorylation is dependent on protein kinase C (PKC) activation of LRRK1. Prenylated. Prenylation is required for association with cellular membranes. In terms of tissue distribution, widely expressed. High expression in liver, heart and kidney. Found in sensory and motor neurons.

It localises to the cytoplasmic vesicle. Its subcellular location is the phagosome membrane. The protein resides in the late endosome membrane. The protein localises to the lysosome membrane. It is found in the melanosome membrane. It localises to the autophagosome membrane. Its subcellular location is the lipid droplet. The protein resides in the endosome membrane. The protein localises to the mitochondrion membrane. The catalysed reaction is GTP + H2O = GDP + phosphate + H(+). Its activity is regulated as follows. Regulated by guanine nucleotide exchange factors (GEFs) which promote the exchange of bound GDP for free GTP. Regulated by GTPase activating proteins (GAPs) which increase the GTP hydrolysis activity. Inhibited by GDP dissociation inhibitors (GDIs). Functionally, the small GTPases Rab are key regulators of intracellular membrane trafficking, from the formation of transport vesicles to their fusion with membranes. Rabs cycle between an inactive GDP-bound form and an active GTP-bound form that is able to recruit to membranes different sets of downstream effectors directly responsible for vesicle formation, movement, tethering and fusion. In its active state, RAB7A binds to a variety of effector proteins playing a key role in the regulation of endo-lysosomal trafficking. Governs early-to-late endosomal maturation, microtubule minus-end as well as plus-end directed endosomal migration and positioning, and endosome-lysosome transport through different protein-protein interaction cascades. Also plays a central role in growth-factor-mediated cell signaling, nutrient-transporter-mediated nutrient uptake, neurotrophin transport in the axons of neurons and lipid metabolism. Also involved in regulation of some specialized endosomal membrane trafficking, such as maturation of melanosomes, pathogen-induced phagosomes (or vacuoles) and autophagosomes. Plays a role in the maturation and acidification of phagosomes that engulf pathogens, such as S.aureus and Mycobacteria. Plays a role in the fusion of phagosomes with lysosomes. In concert with RAC1, plays a role in regulating the formation of RBs (ruffled borders) in osteoclasts. Controls the endosomal trafficking and neurite outgrowth signaling of NTRK1/TRKA. Regulates the endocytic trafficking of the EGF-EGFR complex by regulating its lysosomal degradation. Involved in the ADRB2-stimulated lipolysis through lipophagy, a cytosolic lipase-independent autophagic pathway. Required for the exosomal release of SDCBP, CD63 and syndecan. Required for vesicular trafficking and cell surface expression of ACE2. May play a role in PRPH neuronal intermediate filament assembly. The sequence is that of Ras-related protein Rab-7a from Mus musculus (Mouse).